A 573-amino-acid polypeptide reads, in one-letter code: Potassium-transporting ATPase potassium-binding subunit (573 aa).

10 helical membrane-spanning segments follow: residues 6 to 26 (ILFA…GSYI), 66 to 86 (FFSL…ILLL), 135 to 155 (ALAV…IALI), 177 to 197 (IFWI…FQGV), 257 to 277 (IQMV…GKWV), 283 to 303 (GWLI…VMTI), 382 to 402 (IFGG…LAVF), 428 to 448 (MFAL…AAVI), 493 to 513 (ITIA…VIML), and 537 to 557 (FIFA…TIFP).

The protein belongs to the KdpA family. In terms of assembly, the system is composed of three essential subunits: KdpA, KdpB and KdpC.

It is found in the cell inner membrane. Functionally, part of the high-affinity ATP-driven potassium transport (or Kdp) system, which catalyzes the hydrolysis of ATP coupled with the electrogenic transport of potassium into the cytoplasm. This subunit binds the periplasmic potassium ions and delivers the ions to the membrane domain of KdpB through an intramembrane tunnel. This is Potassium-transporting ATPase potassium-binding subunit from Francisella tularensis subsp. novicida (strain U112).